Here is a 453-residue protein sequence, read N- to C-terminus: Midnolin-A (453 aa).

In terms of domain architecture, Ubiquitin-like spans 20–94; that stretch reads MNLNIQSTTG…LTLLPSVEAG (75 aa). Disordered stretches follow at residues 184–219, 232–256, 333–376, and 390–429; these read SHLASCTPGPTPPTTLSPTSSTHCNGPHSSPLTTSV, CAEQAPCSTRGTEGTSSSPSSRSRK, RNAK…ENRA, and QKRLRRKARRDSRAPYHWMPTRKSSRTSSNSSTSSGEGSL. Residues 206–219 are compositionally biased toward polar residues; the sequence is HCNGPHSSPLTTSV. Low complexity-rich tracts occupy residues 239–252 and 338–351; these read STRGTEGTSSSPSS and TSPQSTSPQQTTHP. The segment covering 365–376 has biased composition (basic and acidic residues); sequence SGDRLRQTENRA. The span at 390–399 shows a compositional bias: basic residues; the sequence is QKRLRRKARR. Residues 415–428 are compositionally biased toward low complexity; the sequence is RTSSNSSTSSGEGS.

The protein localises to the nucleus. It is found in the cytoplasm. It localises to the cytosol. The protein resides in the nucleolus. Functionally, facilitates ubiquitin-independent proteasomal degradation of polycomb protein CBX4. Plays a role in inhibiting the activity of glucokinase GCK and both glucose-induced and basal insulin secretion. The protein is Midnolin-A (midn-a) of Xenopus laevis (African clawed frog).